We begin with the raw amino-acid sequence, 205 residues long: Probable GTP-binding protein EngB (205 aa).

The region spanning 29 to 203 is the EngB-type G domain; the sequence is QGAEIAFIGR…KAVLSQWFRS (175 aa). GTP-binding positions include 37–44, 64–68, 82–85, 149–152, and 182–184; these read GRSNAGKS, GRTQM, DLPG, TKSD, and FSS. 2 residues coordinate Mg(2+): Ser-44 and Thr-66.

It belongs to the TRAFAC class TrmE-Era-EngA-EngB-Septin-like GTPase superfamily. EngB GTPase family. The cofactor is Mg(2+).

Functionally, necessary for normal cell division and for the maintenance of normal septation. This chain is Probable GTP-binding protein EngB, found in Coxiella burnetii (strain RSA 331 / Henzerling II).